A 470-amino-acid polypeptide reads, in one-letter code: Sugar transporter ESL1 (470 aa).

The Essential for the localization to the vacuole membrane motif lies at 10–16 (LEAGLLL). The next 12 helical transmembrane spans lie at 28–48 (ITAV…CFGC), 68–88 (VAQY…GAIF), 99–119 (KGTM…VALA), 130–150 (LSTG…IAEI), 157–177 (GAFV…FYVI), 186–206 (LALI…FIPE), 268–288 (VVIG…GLMY), 303–323 (IGSM…LILV), 332–352 (LLAS…SFCF), 368–388 (IGVV…PWII), 404–424 (LVTL…NFML), and 430–450 (GTFL…YAMV).

The protein belongs to the major facilitator superfamily. Sugar transporter (TC 2.A.1.1) family. Expressed in both shoots and roots. In roots, strongly expressed in pericycle and xylem parenchyma cells, and to a lesser extent in the root endodermis. In flowers, expressed in sepals.

It is found in the vacuole membrane. The protein localises to the vesicle. In terms of biological role, sugar transporter. Transports monosaccharides across the vacuolar membrane independently from a proton gradient. May function coordinately with the vacuolar invertase to regulate osmotic pressure by affecting the accumulation of sugar in the cells under abiotic stress conditions. This chain is Sugar transporter ESL1, found in Arabidopsis thaliana (Mouse-ear cress).